The sequence spans 73 residues: Putative membrane protein insertion efficiency factor (73 aa).

It belongs to the UPF0161 family.

The protein localises to the cell inner membrane. In terms of biological role, could be involved in insertion of integral membrane proteins into the membrane. This is Putative membrane protein insertion efficiency factor from Dinoroseobacter shibae (strain DSM 16493 / NCIMB 14021 / DFL 12).